The chain runs to 725 residues: MDGVLVILLSLVLLVLVALILAVAWLARTARGDRHYGAATRATRSSSGMAASVDALALDDDDGPAVRVLPPVRPAAEGERPAGDAPGAAYGESAAAPDAGLGSPAPRAPHHDAAAAPEPGAAIGGAPTPAAGSPADASDTGRIAETVDTGTVLAVAAVADTPSRVAATEDTSLEAPLRESALRESAPGESASVRRAAEREAAQIVARAEREAAERLARVEREAAEIRRRGEDEVASLRNQARAEAAADASRAEAAVRDAARVELEAARAEIATARTSFEEELRVRRAELRGREEALAAREQRVEERTAGLDEHASRLAGREQDLLDREDELAHRTAEAADDEAARQAALERIAELTAVQARAELVSTIEHEARREAALLVREIEARAEEEGEERARRIVTTAIQRVASDQTTESVVTVLHLPGDEMKGRIIGREGRNIRTFESVTGVNVLIDDTPEAVLLSCFDPVRREIGRITLAALVSDGRIHPHRIEEEYARAQVEVEERCVRAGEDALLETGISEMHPELVTLLGRLRYRTSYGQNVLAHLIESAHLAGIMAAELRMALPLAKRAALLHDLGKALTHEVEGSHALIGADVARRYGESEEVVHAIEAHHNEVAPRSLCAVLTQAADQISGGRPGARRDSLESYVKRLERIEQIAGDRPGVDRVFAMQAGREVRVMVVPEEVDDVAAHLLARDVARQIEDELTYPGQIRVTVVRETRAVGTAR.

Residues 4–24 (VLVILLSLVLLVLVALILAVA) form a helical membrane-spanning segment. Disordered stretches follow at residues 62-140 (DGPA…ASDT), 165-195 (VAAT…SVRR), and 300-321 (EQRV…AGRE). 2 stretches are compositionally biased toward low complexity: residues 84–100 (DAPG…PDAG) and 114–137 (AAAP…PADA). Residues 415-481 (VVTVLHLPGD…RITLAALVSD (67 aa)) form the KH domain. The HD domain maps to 541–634 (VLAHLIESAH…TQAADQISGG (94 aa)).

It belongs to the RNase Y family.

The protein localises to the cell membrane. Endoribonuclease that initiates mRNA decay. The protein is Ribonuclease Y of Frankia alni (strain DSM 45986 / CECT 9034 / ACN14a).